Here is a 243-residue protein sequence, read N- to C-terminus: 3-deoxy-manno-octulosonate cytidylyltransferase (243 aa).

Belongs to the KdsB family.

The protein resides in the cytoplasm. The catalysed reaction is 3-deoxy-alpha-D-manno-oct-2-ulosonate + CTP = CMP-3-deoxy-beta-D-manno-octulosonate + diphosphate. Its pathway is nucleotide-sugar biosynthesis; CMP-3-deoxy-D-manno-octulosonate biosynthesis; CMP-3-deoxy-D-manno-octulosonate from 3-deoxy-D-manno-octulosonate and CTP: step 1/1. It participates in bacterial outer membrane biogenesis; lipopolysaccharide biosynthesis. In terms of biological role, activates KDO (a required 8-carbon sugar) for incorporation into bacterial lipopolysaccharide in Gram-negative bacteria. The protein is 3-deoxy-manno-octulosonate cytidylyltransferase of Helicobacter acinonychis (strain Sheeba).